The primary structure comprises 252 residues: Ubiquinone/menaquinone biosynthesis C-methyltransferase UbiE (252 aa).

Residues Thr-71, Asp-100, 124 to 125 (DA), and Ser-141 contribute to the S-adenosyl-L-methionine site.

The protein belongs to the class I-like SAM-binding methyltransferase superfamily. MenG/UbiE family.

It carries out the reaction a 2-demethylmenaquinol + S-adenosyl-L-methionine = a menaquinol + S-adenosyl-L-homocysteine + H(+). The catalysed reaction is a 2-methoxy-6-(all-trans-polyprenyl)benzene-1,4-diol + S-adenosyl-L-methionine = a 5-methoxy-2-methyl-3-(all-trans-polyprenyl)benzene-1,4-diol + S-adenosyl-L-homocysteine + H(+). It participates in quinol/quinone metabolism; menaquinone biosynthesis; menaquinol from 1,4-dihydroxy-2-naphthoate: step 2/2. Its pathway is cofactor biosynthesis; ubiquinone biosynthesis. Its function is as follows. Methyltransferase required for the conversion of demethylmenaquinol (DMKH2) to menaquinol (MKH2) and the conversion of 2-polyprenyl-6-methoxy-1,4-benzoquinol (DDMQH2) to 2-polyprenyl-3-methyl-6-methoxy-1,4-benzoquinol (DMQH2). The protein is Ubiquinone/menaquinone biosynthesis C-methyltransferase UbiE of Caulobacter sp. (strain K31).